We begin with the raw amino-acid sequence, 65 residues long: Large ribosomal subunit protein bL35 (65 aa).

Positions 1 to 28 are disordered; it reads MPKIKTNRGAAKRFRKTGSGKIRRNKAF. Over residues 10 to 26 the composition is skewed to basic residues; it reads AAKRFRKTGSGKIRRNK.

Belongs to the bacterial ribosomal protein bL35 family.

The sequence is that of Large ribosomal subunit protein bL35 from Syntrophotalea carbinolica (strain DSM 2380 / NBRC 103641 / GraBd1) (Pelobacter carbinolicus).